Here is a 338-residue protein sequence, read N- to C-terminus: Holliday junction branch migration complex subunit RuvB (338 aa).

A large ATPase domain (RuvB-L) region spans residues 4–184 (SDRLVSGKAR…FGISHHLQYY (181 aa)). Residues Arg-24, Gly-65, Lys-68, Thr-69, Thr-70, 131–133 (EDY), Arg-174, Tyr-184, and Arg-221 each bind ATP. Residue Thr-69 coordinates Mg(2+). The tract at residues 185–255 (HHDELTQIVM…LADEALELLA (71 aa)) is small ATPAse domain (RuvB-S). Residues 258 to 338 (HLGFDALDRR…NIEVPDGRNS (81 aa)) form a head domain (RuvB-H) region. DNA contacts are provided by Arg-294, Arg-313, and Arg-318.

The protein belongs to the RuvB family. As to quaternary structure, homohexamer. Forms an RuvA(8)-RuvB(12)-Holliday junction (HJ) complex. HJ DNA is sandwiched between 2 RuvA tetramers; dsDNA enters through RuvA and exits via RuvB. An RuvB hexamer assembles on each DNA strand where it exits the tetramer. Each RuvB hexamer is contacted by two RuvA subunits (via domain III) on 2 adjacent RuvB subunits; this complex drives branch migration. In the full resolvosome a probable DNA-RuvA(4)-RuvB(12)-RuvC(2) complex forms which resolves the HJ.

Its subcellular location is the cytoplasm. The enzyme catalyses ATP + H2O = ADP + phosphate + H(+). Its function is as follows. The RuvA-RuvB-RuvC complex processes Holliday junction (HJ) DNA during genetic recombination and DNA repair, while the RuvA-RuvB complex plays an important role in the rescue of blocked DNA replication forks via replication fork reversal (RFR). RuvA specifically binds to HJ cruciform DNA, conferring on it an open structure. The RuvB hexamer acts as an ATP-dependent pump, pulling dsDNA into and through the RuvAB complex. RuvB forms 2 homohexamers on either side of HJ DNA bound by 1 or 2 RuvA tetramers; 4 subunits per hexamer contact DNA at a time. Coordinated motions by a converter formed by DNA-disengaged RuvB subunits stimulates ATP hydrolysis and nucleotide exchange. Immobilization of the converter enables RuvB to convert the ATP-contained energy into a lever motion, pulling 2 nucleotides of DNA out of the RuvA tetramer per ATP hydrolyzed, thus driving DNA branch migration. The RuvB motors rotate together with the DNA substrate, which together with the progressing nucleotide cycle form the mechanistic basis for DNA recombination by continuous HJ branch migration. Branch migration allows RuvC to scan DNA until it finds its consensus sequence, where it cleaves and resolves cruciform DNA. The chain is Holliday junction branch migration complex subunit RuvB from Dichelobacter nodosus (strain VCS1703A).